Reading from the N-terminus, the 526-residue chain is Bifunctional purine biosynthesis protein PurH (526 aa).

An MGS-like domain is found at 1–147 (MSVIKRALIS…KNWKHVAIVT (147 aa)).

It belongs to the PurH family.

The catalysed reaction is (6R)-10-formyltetrahydrofolate + 5-amino-1-(5-phospho-beta-D-ribosyl)imidazole-4-carboxamide = 5-formamido-1-(5-phospho-D-ribosyl)imidazole-4-carboxamide + (6S)-5,6,7,8-tetrahydrofolate. It catalyses the reaction IMP + H2O = 5-formamido-1-(5-phospho-D-ribosyl)imidazole-4-carboxamide. The protein operates within purine metabolism; IMP biosynthesis via de novo pathway; 5-formamido-1-(5-phospho-D-ribosyl)imidazole-4-carboxamide from 5-amino-1-(5-phospho-D-ribosyl)imidazole-4-carboxamide (10-formyl THF route): step 1/1. Its pathway is purine metabolism; IMP biosynthesis via de novo pathway; IMP from 5-formamido-1-(5-phospho-D-ribosyl)imidazole-4-carboxamide: step 1/1. In Neisseria gonorrhoeae (strain ATCC 700825 / FA 1090), this protein is Bifunctional purine biosynthesis protein PurH.